The chain runs to 181 residues: Translation initiation factor IF-3 (181 aa).

The protein belongs to the IF-3 family. As to quaternary structure, monomer.

It localises to the cytoplasm. IF-3 binds to the 30S ribosomal subunit and shifts the equilibrium between 70S ribosomes and their 50S and 30S subunits in favor of the free subunits, thus enhancing the availability of 30S subunits on which protein synthesis initiation begins. In Idiomarina loihiensis (strain ATCC BAA-735 / DSM 15497 / L2-TR), this protein is Translation initiation factor IF-3.